Here is a 359-residue protein sequence, read N- to C-terminus: MEKLRVELGERSYEILIDRGNLSLIGERLLRFSISKKIGIISNPKVSELYGQKVISSLQKEGFEPFVILIPDGEHYKDYFWAYHILTQLLEFGFDRGSFLIALGGGVIGDITGFVASIYMRGISYIQIPTTLLAQVDSSVGGKTAVNHPLGKNMIGTFWQPSLVWIDVDTLESLPEREFISGLAEVIKYGVIWDKEFFEFLEINRTKILKKDKDILISIIKRACEIKAEVVSKDERESALRAILNYGHTIGHAIETLTGYSSYLHGEAISIGMVHEAKLSSMLGFLDKEDFEKIRNILKEFGLPVNLPINMDSSAMLKTILLDKKNIEGKIRMVIPDSIGKMKINFEISGEDLKKVLNE.

NAD(+) is bound by residues 72-77 (DGEHYK), 106-110 (GVIGD), 130-131 (TT), Lys143, and Lys152. Zn(2+)-binding residues include Glu185, His248, and His265.

The protein belongs to the sugar phosphate cyclases superfamily. Dehydroquinate synthase family. It depends on Co(2+) as a cofactor. The cofactor is Zn(2+). NAD(+) serves as cofactor.

The protein resides in the cytoplasm. It carries out the reaction 7-phospho-2-dehydro-3-deoxy-D-arabino-heptonate = 3-dehydroquinate + phosphate. It functions in the pathway metabolic intermediate biosynthesis; chorismate biosynthesis; chorismate from D-erythrose 4-phosphate and phosphoenolpyruvate: step 2/7. In terms of biological role, catalyzes the conversion of 3-deoxy-D-arabino-heptulosonate 7-phosphate (DAHP) to dehydroquinate (DHQ). This chain is 3-dehydroquinate synthase, found in Thermodesulfovibrio yellowstonii (strain ATCC 51303 / DSM 11347 / YP87).